We begin with the raw amino-acid sequence, 514 residues long: CUGBP Elav-like family member 2 (514 aa).

RRM domains lie at 44–127 (IKMF…PADS), 136–216 (RKLF…FADT), and 429–507 (ANLF…LKRS).

It belongs to the CELF/BRUNOL family.

Its subcellular location is the nucleus. The protein resides in the cytoplasm. Its function is as follows. RNA-binding protein implicated in the regulation of several post-transcriptional events. May be involved in pre-mRNA alternative splicing, mRNA translation repression and stability. The chain is CUGBP Elav-like family member 2 (celf2) from Danio rerio (Zebrafish).